We begin with the raw amino-acid sequence, 329 residues long: DNA-directed RNA polymerase subunit alpha (329 aa).

Residues 1–235 (MLGSVTDFLK…EQLEAFVDLR (235 aa)) are alpha N-terminal domain (alpha-NTD). Positions 249–329 (FDPILLRPVD…NWPPASIADE (81 aa)) are alpha C-terminal domain (alpha-CTD).

Belongs to the RNA polymerase alpha chain family. As to quaternary structure, homodimer. The RNAP catalytic core consists of 2 alpha, 1 beta, 1 beta' and 1 omega subunit. When a sigma factor is associated with the core the holoenzyme is formed, which can initiate transcription.

It carries out the reaction RNA(n) + a ribonucleoside 5'-triphosphate = RNA(n+1) + diphosphate. Functionally, DNA-dependent RNA polymerase catalyzes the transcription of DNA into RNA using the four ribonucleoside triphosphates as substrates. The polypeptide is DNA-directed RNA polymerase subunit alpha (Aeromonas hydrophila subsp. hydrophila (strain ATCC 7966 / DSM 30187 / BCRC 13018 / CCUG 14551 / JCM 1027 / KCTC 2358 / NCIMB 9240 / NCTC 8049)).